A 2265-amino-acid chain; its full sequence is Collagen alpha-6(VI) chain (2265 aa).

Positions 1 to 18 (MLLVLCLTMICFHVCVNQ) are cleaved as a signal peptide. The tract at residues 19 to 1390 (DSGPEYADVV…TCCCLLCKCT (1372 aa)) is nonhelical region. VWFA domains follow at residues 26–205 (DVVF…IKDV), 228–406 (DVVF…LKKL), 435–605 (DIYL…RNQV), 621–790 (DIMF…EDDL), 808–981 (DVVF…FSDV), 999–1170 (DLVF…KKRI), and 1186–1378 (DVVV…INVA). Asn-197, Asn-238, and Asn-346 each carry an N-linked (GlcNAc...) asparagine glycan. Asn-760 is a glycosylation site (N-linked (GlcNAc...) asparagine). Positions 1391–1724 (GGDGAMGDPG…GRKGVKGARG (334 aa)) are triple-helical region. Positions 1398 to 1722 (DPGSAGKKGP…PPGRKGVKGA (325 aa)) are disordered. The span at 1455-1470 (EEGEVGEDGLDGLDGE) shows a compositional bias: acidic residues. Residues 1497 to 1507 (AAGDRGAKGLR) show a composition bias toward basic and acidic residues. The Cell attachment site signature appears at 1507–1509 (RGD). Positions 1546 to 1558 (SRRKMVVHGRRGH) are enriched in basic residues. A nonhelical region region spans residues 1725–2265 (LASFSTCDLI…ATSKLGKRSA (541 aa)). VWFA domains are found at residues 1756 to 1936 (ELVF…ERLQ) and 1964 to 2165 (DTAF…INSI). The interval 2186–2205 (SRDLKPPPRQFRSFVPGPQK) is disordered.

It belongs to the type VI collagen family. As to quaternary structure, trimers composed of three different chains: alpha-1(VI), alpha-2(VI), and alpha-3(VI) or alpha-4(VI) or alpha-5(VI) or alpha-6(VI). Prolines at the third position of the tripeptide repeating unit (G-X-Y) are hydroxylated in some or all of the chains. In terms of tissue distribution, in newborn, it is expressed in lung, heart, kidney, muscle, brain, intestine, skin, femur and sternum. In adult, it is expressed in lung, heart, muscle, ovary, brain, liver and sternum.

The protein localises to the secreted. The protein resides in the extracellular space. Its subcellular location is the extracellular matrix. In terms of biological role, collagen VI acts as a cell-binding protein. This chain is Collagen alpha-6(VI) chain (Col6a6), found in Mus musculus (Mouse).